The following is a 151-amino-acid chain: Aspartate 1-decarboxylase (151 aa).

S26 acts as the Schiff-base intermediate with substrate; via pyruvic acid in catalysis. The residue at position 26 (S26) is a Pyruvic acid (Ser). A substrate-binding site is contributed by T58. Y59 functions as the Proton donor in the catalytic mechanism. 74–76 lines the substrate pocket; that stretch reads GGA.

This sequence belongs to the PanD family. In terms of assembly, heterooctamer of four alpha and four beta subunits. Pyruvate serves as cofactor. Is synthesized initially as an inactive proenzyme, which is activated by self-cleavage at a specific serine bond to produce a beta-subunit with a hydroxyl group at its C-terminus and an alpha-subunit with a pyruvoyl group at its N-terminus.

Its subcellular location is the cytoplasm. It catalyses the reaction L-aspartate + H(+) = beta-alanine + CO2. Its pathway is cofactor biosynthesis; (R)-pantothenate biosynthesis; beta-alanine from L-aspartate: step 1/1. Catalyzes the pyruvoyl-dependent decarboxylation of aspartate to produce beta-alanine. The sequence is that of Aspartate 1-decarboxylase from Crocosphaera subtropica (strain ATCC 51142 / BH68) (Cyanothece sp. (strain ATCC 51142)).